Here is a 285-residue protein sequence, read N- to C-terminus: Ribonuclease H1 (285 aa).

The disordered stretch occupies residues 72 to 122 (RSSSSPDGSKGQESAHVQKLQVKTSKRPREPLGEEEEPPEPGAKHTRQDTE). One can recognise an RNase H type-1 domain in the interval 135–281 (MGESVVVYTD…ADRLAREGAK (147 aa)). Asp-144, Glu-185, Asp-209, and Asp-273 together coordinate Mg(2+).

Belongs to the RNase H family. Monomer. It depends on Mg(2+) as a cofactor.

Its subcellular location is the cytoplasm. It carries out the reaction Endonucleolytic cleavage to 5'-phosphomonoester.. With respect to regulation, in the presence of magnesium, manganese is inhibitory. In terms of biological role, endonuclease that specifically degrades the RNA of RNA-DNA hybrids. Plays a role in RNA polymerase II (RNAp II) transcription termination by degrading R-loop RNA-DNA hybrid formation at G-rich pause sites located downstream of the poly(A) site and behind the elongating RNAp II. The protein is Ribonuclease H1 (Rnaseh1) of Rattus norvegicus (Rat).